A 272-amino-acid polypeptide reads, in one-letter code: MAAKVFESIGKFGLGLAVAGGVVNSALYNVDAGHRAVIFDRFRGVQDTVVGEGTHFLIPWVQKPIIFDCRSRPRNIPVITGSKDLQNVNITLRILFRPVTAQLPRIFTSIGEDYDERVLPSITTEILKSVVARFDAGELITQRELVSRQVSEDLTERAATFGLILDDVSLTHLTFGKEFTEAVEMKQVAQQEAERARFIVEKAEQQKKAAVISAEGDSKAAELIANSLATAGDGLIELRKLEAAEDIAYQLSRSRNITYLPSGQSVLLQLPQ.

A coiled-coil region spans residues 177–211; that stretch reads KEFTEAVEMKQVAQQEAERARFIVEKAEQQKKAAV.

As to quaternary structure, the mitochondrial prohibitin complex consists of two subunits (PHB1 and PHB2), assembled into a membrane-associated ring-shaped supercomplex of approximately 1 mDa.

It localises to the mitochondrion inner membrane. It is found in the nucleus. The protein localises to the cytoplasm. The protein resides in the cell membrane. Functionally, protein with pleiotropic attributes mediated in a cell-compartment- and tissue-specific manner, which include the plasma membrane-associated cell signaling functions, mitochondrial chaperone, and transcriptional co-regulator of transcription factors in the nucleus. In the mitochondria, together with PHB2, forms large ring complexes (prohibitin complexes) in the inner mitochondrial membrane (IMM) and functions as a chaperone protein that stabilizes mitochondrial respiratory enzymes and maintains mitochondrial integrity in the IMM, which is required for mitochondrial morphogenesis, neuronal survival, and normal lifespan. Its function is as follows. In the nucleus, acts as a transcription coregulator, enhances promoter binding by TP53, a transcription factor it activates, but reduces the promoter binding by E2F1, a transcription factor it represses. In terms of biological role, in the plasma membrane, cooperates with CD86 to mediate CD86-signaling in B lymphocytes that regulates the level of IgG1 produced through the activation of distal signaling intermediates. Upon CD40 engagement, required to activate NF-kappa-B signaling pathway via phospholipase C and protein kinase C activation. This chain is Prohibitin 1 (PHB1), found in Gallus gallus (Chicken).